Reading from the N-terminus, the 482-residue chain is MFGLESKSPKILVIGDLMIDHYVWGSCERISPEAPVQVVDVKDENNRLGGACNVVHNLIALNAQVFVCGVVGNDEAGFWLGEKLESMGVDISYLFVDTSRPTTKKTRVIIANQQVLRVDRESKTPIDSHIHNNIVQHLHAVLDEVDCIIISDYGKGLLNDELTHFVIDYAKSKSKLVLCDPKGKDYSKYTGATLLTPNKKEAELATGITICDKDSLIKAGMTLKTQCQLDISLITLSEDGIGIFDNNQIHIIPTRAKEVYDVTGAGDTVIAALSFALSSGCDIFQACEFANVAAAVVVGKVGSAVATHSEILQYIHTQPSNLQQYIESKIISQESLFTLLKDLKQSKIVFTNGCFDILHIGHLSYLNKARDLGDILIVGLNDDDSIKRLKGKERPINTLHNRALMLAGLECVDYVVSFCQDTPLELIKAIKPDVLVKGGDYHNKEVVGKEYAKEVVLIDFIEGHSTSNIIESIQRSKICKHS.

Residues 1 to 322 (MFGLESKSPK…QYIHTQPSNL (322 aa)) form a ribokinase region. 198–201 (NKKE) is an ATP binding site. Residue D267 is part of the active site. Residues 350–482 (FTNGCFDILH…IQRSKICKHS (133 aa)) form a cytidylyltransferase region.

The protein in the N-terminal section; belongs to the carbohydrate kinase PfkB family. This sequence in the C-terminal section; belongs to the cytidylyltransferase family. As to quaternary structure, homodimer.

The catalysed reaction is D-glycero-beta-D-manno-heptose 7-phosphate + ATP = D-glycero-beta-D-manno-heptose 1,7-bisphosphate + ADP + H(+). It catalyses the reaction D-glycero-beta-D-manno-heptose 1-phosphate + ATP + H(+) = ADP-D-glycero-beta-D-manno-heptose + diphosphate. Its pathway is nucleotide-sugar biosynthesis; ADP-L-glycero-beta-D-manno-heptose biosynthesis; ADP-L-glycero-beta-D-manno-heptose from D-glycero-beta-D-manno-heptose 7-phosphate: step 1/4. It functions in the pathway nucleotide-sugar biosynthesis; ADP-L-glycero-beta-D-manno-heptose biosynthesis; ADP-L-glycero-beta-D-manno-heptose from D-glycero-beta-D-manno-heptose 7-phosphate: step 3/4. The protein operates within bacterial outer membrane biogenesis; LPS core biosynthesis. Functionally, catalyzes the phosphorylation of D-glycero-D-manno-heptose 7-phosphate at the C-1 position to selectively form D-glycero-beta-D-manno-heptose-1,7-bisphosphate. Its function is as follows. Catalyzes the ADP transfer from ATP to D-glycero-beta-D-manno-heptose 1-phosphate, yielding ADP-D-glycero-beta-D-manno-heptose. The protein is Bifunctional protein HldE of Helicobacter hepaticus (strain ATCC 51449 / 3B1).